The primary structure comprises 494 residues: Neuronal acetylcholine receptor subunit alpha-6 (494 aa).

A signal peptide spans 1 to 30 (MLNSRDQGNLHSGLCLWLCGFLALFKGSTG). At 31–240 (CESEEQLFHR…TYSFYIRRLP (210 aa)) the chain is on the extracellular side. Residues Asn54 and Asn171 are each glycosylated (N-linked (GlcNAc...) asparagine). Cystine bridges form between Cys158–Cys172 and Cys222–Cys223. 3 consecutive transmembrane segments (helical) span residues 241 to 265 (MFYTINLIIPCLFISFLTVLVFYLP), 272 to 290 (VTLCISVLLSLTVFLLVIT), and 306 to 327 (YLLFTMIFVTLSIVVTVFVLNI). At 328-465 (HYRTPATHTM…WKYMAMVVDR (138 aa)) the chain is on the cytoplasmic side. Residues 399–423 (QKSSDIAPGKRRSSQQPARWVAENS) are disordered. Ser401 carries the post-translational modification Phosphoserine. Residues 466 to 485 (VFLWVFIIVCVFGTVGLFLQ) traverse the membrane as a helical segment.

The protein belongs to the ligand-gated ion channel (TC 1.A.9) family. Acetylcholine receptor (TC 1.A.9.1) subfamily. Alpha-6/CHRNA6 sub-subfamily. Neuronal AChR is composed of two different types of subunits: alpha and non-alpha (beta). CHRNA6/alpha-6 subunit can be combined to CHRNB2/beta-2 and CHRNA4/alpha-4 to give rise to functional receptors. Interacts with LYPD6. In terms of tissue distribution, predominantly expressed in only a few brain areas, including dopaminergic neurons, norepirephrine neurons and cells of the visual system.

The protein resides in the synaptic cell membrane. The catalysed reaction is K(+)(in) = K(+)(out). The enzyme catalyses Na(+)(in) = Na(+)(out). It carries out the reaction Ca(2+)(in) = Ca(2+)(out). Activated by a myriad of ligands such as acetylcholine, cytisine and nicotine. CHRNA6 nAChR activity is inhibited by the antagonists alpha-conotoxin MII and PIA, a small disulfide-constrained peptides from cone snails. Functionally, component of neuronal acetylcholine receptors (nAChRs) that function as pentameric, ligand-gated cation channels with high calcium permeability among other activities. nAChRs are excitatory neurotrasnmitter receptors formed by a collection of nAChR subunits known to mediate synaptic transmission in the nervous system and the neuromuscular junction. Each nAchR subunit confers differential attributes to channel properties, including activation, deactivation and desensitization kinetics, pH sensitivity, cation permeability, and binding to allosteric modulators. CHRNA6 forms pentameric channels with CHRNB2 and CHRNA4 that exhibit high sensitivity to ACh and nicotine and are predominantly expressed in only a few brain areas, including dopaminergic neurons, norepirephrine neurons and cells of the visual system. nAChrs containing CHRNA6 subunits mediate endogenous cholinergic modulation of dopamine and gamma-aminobutyric acid (GABA) release in response to nicotine at nerve terminals. This is Neuronal acetylcholine receptor subunit alpha-6 (Chrna6) from Mus musculus (Mouse).